Reading from the N-terminus, the 697-residue chain is Elongation factor G 2 (697 aa).

Residues 6–281 (TNYRNFGIFA…AVVDFLPNPT (276 aa)) form the tr-type G domain. GTP-binding positions include 15-22 (AHVDAGKT), 79-83 (DTPGH), and 133-136 (NKLD).

This sequence belongs to the TRAFAC class translation factor GTPase superfamily. Classic translation factor GTPase family. EF-G/EF-2 subfamily.

The protein localises to the cytoplasm. Its function is as follows. Catalyzes the GTP-dependent ribosomal translocation step during translation elongation. During this step, the ribosome changes from the pre-translocational (PRE) to the post-translocational (POST) state as the newly formed A-site-bound peptidyl-tRNA and P-site-bound deacylated tRNA move to the P and E sites, respectively. Catalyzes the coordinated movement of the two tRNA molecules, the mRNA and conformational changes in the ribosome. The protein is Elongation factor G 2 of Trichodesmium erythraeum (strain IMS101).